The sequence spans 248 residues: Ubiquinone biosynthesis O-methyltransferase (248 aa).

The S-adenosyl-L-methionine site is built by arginine 41, glycine 72, aspartate 93, and methionine 136.

It belongs to the methyltransferase superfamily. UbiG/COQ3 family.

It catalyses the reaction a 3-demethylubiquinol + S-adenosyl-L-methionine = a ubiquinol + S-adenosyl-L-homocysteine + H(+). The catalysed reaction is a 3-(all-trans-polyprenyl)benzene-1,2-diol + S-adenosyl-L-methionine = a 2-methoxy-6-(all-trans-polyprenyl)phenol + S-adenosyl-L-homocysteine + H(+). It functions in the pathway cofactor biosynthesis; ubiquinone biosynthesis. In terms of biological role, O-methyltransferase that catalyzes the 2 O-methylation steps in the ubiquinone biosynthetic pathway. This Brucella anthropi (strain ATCC 49188 / DSM 6882 / CCUG 24695 / JCM 21032 / LMG 3331 / NBRC 15819 / NCTC 12168 / Alc 37) (Ochrobactrum anthropi) protein is Ubiquinone biosynthesis O-methyltransferase.